The following is a 203-amino-acid chain: Guanylate kinase (203 aa).

Residues 3–181 form the Guanylate kinase-like domain; it reads GTLYIVAAPS…AVSEMCAIFT (179 aa). 10 to 17 contributes to the ATP binding site; sequence APSGAGKS.

Belongs to the guanylate kinase family.

The protein resides in the cytoplasm. It catalyses the reaction GMP + ATP = GDP + ADP. Essential for recycling GMP and indirectly, cGMP. This chain is Guanylate kinase, found in Xanthomonas campestris pv. campestris (strain 8004).